Reading from the N-terminus, the 314-residue chain is MFNKKRYLQYPQVPPSLNPRASTSVVSLNGNEILLHHHDVISGYYLASNPQNLEPDALFNGFHHDVGGTNGDPLVLANTLAKKHTPKKDRHSKINRPQGPRDRRVRLSIGIARKFFDLQEMLGFDKPSKTLDWLLTKSKEAIKELVQSKSSKSNISNSPSECDQEVLSADLPYIGSSKGKAAVGLNSNKCKGGRDAVDLAKESRAKARARARERTKEKMCIKQLNQERNKSYEWNPSVLFQSKSSQQFEVSGPSTNYEELNQESIMIKRKLKQNHPSMFGFQPENATENWDYYSNFTSQSNQLCAILDQHKFIN.

A TCP domain is found at 87-145 (KKDRHSKINRPQGPRDRRVRLSIGIARKFFDLQEMLGFDKPSKTLDWLLTKSKEAIKEL). One can recognise a R domain in the interval 201 to 218 (KESRAKARARARERTKEK).

Its subcellular location is the nucleus. Its function is as follows. Transcription regulator involved in the dorsovental asymmetry of flowers. Promotes dorsal identity. This chain is Transcription factor DICHOTOMA (DICH), found in Antirrhinum majus (Garden snapdragon).